The primary structure comprises 289 residues: Oxaloacetate decarboxylase (289 aa).

Ser-47 is a binding site for substrate. Mg(2+) is bound at residue Asp-85. Residues Arg-156 and His-232 each coordinate substrate.

Belongs to the isocitrate lyase/PEP mutase superfamily. Oxaloacetate decarboxylase family. As to quaternary structure, homotetramer; dimer of dimers. The cofactor is Mg(2+).

The enzyme catalyses oxaloacetate + H(+) = pyruvate + CO2. In terms of biological role, catalyzes the decarboxylation of oxaloacetate into pyruvate. Seems to play a role in maintaining cellular concentrations of bicarbonate and pyruvate. This is Oxaloacetate decarboxylase from Rhodopseudomonas palustris (strain HaA2).